A 170-amino-acid chain; its full sequence is MRRGFYIGRFQPYHMGHHLVLEQISREVDEIIVGIGTAQISHTVTDPFTAGERIAMIYGALRELGRWFYIIPLPDINRNAVWVSHVKSMTPPFEVVYSNNPLVVELFMEAGMEVRRPPMYRREVYSGTVIRRLMIEGGDWRQLVPDAVAKVIDEIKGVERLRNISKKDFA.

It belongs to the archaeal NMN adenylyltransferase family.

The protein resides in the cytoplasm. The enzyme catalyses beta-nicotinamide D-ribonucleotide + ATP + H(+) = diphosphate + NAD(+). It participates in cofactor biosynthesis; NAD(+) biosynthesis; NAD(+) from nicotinamide D-ribonucleotide: step 1/1. The polypeptide is Nicotinamide-nucleotide adenylyltransferase (Methanothrix thermoacetophila (strain DSM 6194 / JCM 14653 / NBRC 101360 / PT) (Methanosaeta thermophila)).